The sequence spans 622 residues: Serine/threonine-protein kinase MAK (622 aa).

The region spanning 4-284 is the Protein kinase domain; sequence YTTMRQLGDG…ASQALKHPYF (281 aa). Residues 10-18 and Lys33 contribute to the ATP site; that span reads LGDGTYGSV. Asp125 acts as the Proton acceptor in catalysis. The residue at position 157 (Thr157) is a Phosphothreonine; by autocatalysis. Tyr159 carries the post-translational modification Phosphotyrosine; by autocatalysis. The segment at 301 to 373 is disordered; it reads QTLHKQLQPP…HHKQPQTMFP (73 aa).

The protein belongs to the protein kinase superfamily. CMGC Ser/Thr protein kinase family. CDC2/CDKX subfamily. As to quaternary structure, interacts with RP1. Interacts with AR and CDK20. Found in a complex containing MAK, AR and NCOA3. Interacts with FZR1 (via WD repeats). Requires Mg(2+) as cofactor. Autophosphorylated. Phosphorylated on serine and threonine residues. As to expression, expressed mainly in testicular cells at and after meiosis.

Its subcellular location is the nucleus. It localises to the cytoplasm. The protein localises to the cytoskeleton. It is found in the microtubule organizing center. The protein resides in the centrosome. Its subcellular location is the spindle. It localises to the midbody. The protein localises to the cell projection. It is found in the cilium. The protein resides in the photoreceptor outer segment. Its subcellular location is the photoreceptor inner segment. The catalysed reaction is L-seryl-[protein] + ATP = O-phospho-L-seryl-[protein] + ADP + H(+). It catalyses the reaction L-threonyl-[protein] + ATP = O-phospho-L-threonyl-[protein] + ADP + H(+). Essential for the regulation of ciliary length and required for the long-term survival of photoreceptors. Could play an important function in spermatogenesis. Phosphorylates FZR1 in a cell cycle-dependent manner. Plays a role in the transcriptional coactivation of AR. In Rattus norvegicus (Rat), this protein is Serine/threonine-protein kinase MAK (Mak).